We begin with the raw amino-acid sequence, 267 residues long: Glutamate 5-kinase (267 aa).

Residue Lys18 coordinates ATP. Residues Ser58, Asp145, and Asn157 each coordinate substrate. Residues Ser177–Asp178 and Thr219–Lys225 contribute to the ATP site.

This sequence belongs to the glutamate 5-kinase family.

The protein localises to the cytoplasm. It catalyses the reaction L-glutamate + ATP = L-glutamyl 5-phosphate + ADP. It functions in the pathway amino-acid biosynthesis; L-proline biosynthesis; L-glutamate 5-semialdehyde from L-glutamate: step 1/2. Catalyzes the transfer of a phosphate group to glutamate to form L-glutamate 5-phosphate. The protein is Glutamate 5-kinase of Clostridium tetani (strain Massachusetts / E88).